The primary structure comprises 87 residues: Small ribosomal subunit protein bS20 (87 aa).

This sequence belongs to the bacterial ribosomal protein bS20 family.

Functionally, binds directly to 16S ribosomal RNA. In Shigella flexneri serotype 5b (strain 8401), this protein is Small ribosomal subunit protein bS20.